Here is a 139-residue protein sequence, read N- to C-terminus: Aspartate 1-decarboxylase (139 aa).

The active-site Schiff-base intermediate with substrate; via pyruvic acid is Ser-26. Position 26 is a pyruvic acid (Ser) (Ser-26). Thr-58 lines the substrate pocket. Tyr-59 serves as the catalytic Proton donor. 72–74 lines the substrate pocket; sequence GGA.

The protein belongs to the PanD family. In terms of assembly, heterooctamer of four alpha and four beta subunits. Requires pyruvate as cofactor. Post-translationally, is synthesized initially as an inactive proenzyme, which is activated by self-cleavage at a specific serine bond to produce a beta-subunit with a hydroxyl group at its C-terminus and an alpha-subunit with a pyruvoyl group at its N-terminus.

It localises to the cytoplasm. The enzyme catalyses L-aspartate + H(+) = beta-alanine + CO2. It functions in the pathway cofactor biosynthesis; (R)-pantothenate biosynthesis; beta-alanine from L-aspartate: step 1/1. Catalyzes the pyruvoyl-dependent decarboxylation of aspartate to produce beta-alanine. The polypeptide is Aspartate 1-decarboxylase (Microcystis aeruginosa (strain NIES-843 / IAM M-2473)).